The primary structure comprises 306 residues: Aspartate carbamoyltransferase catalytic subunit (306 aa).

2 residues coordinate carbamoyl phosphate: Arg-54 and Thr-55. Lys-83 serves as a coordination point for L-aspartate. Positions 104, 132, and 135 each coordinate carbamoyl phosphate. L-aspartate is bound by residues Arg-165 and Arg-227. 2 residues coordinate carbamoyl phosphate: Leu-266 and Pro-267.

The protein belongs to the aspartate/ornithine carbamoyltransferase superfamily. ATCase family. Heterododecamer (2C3:3R2) of six catalytic PyrB chains organized as two trimers (C3), and six regulatory PyrI chains organized as three dimers (R2).

It carries out the reaction carbamoyl phosphate + L-aspartate = N-carbamoyl-L-aspartate + phosphate + H(+). The protein operates within pyrimidine metabolism; UMP biosynthesis via de novo pathway; (S)-dihydroorotate from bicarbonate: step 2/3. Functionally, catalyzes the condensation of carbamoyl phosphate and aspartate to form carbamoyl aspartate and inorganic phosphate, the committed step in the de novo pyrimidine nucleotide biosynthesis pathway. This is Aspartate carbamoyltransferase catalytic subunit from Clostridium kluyveri (strain NBRC 12016).